Here is a 364-residue protein sequence, read N- to C-terminus: UDP-N-acetylglucosamine--N-acetylmuramyl-(pentapeptide) pyrophosphoryl-undecaprenol N-acetylglucosamine transferase (364 aa).

UDP-N-acetyl-alpha-D-glucosamine is bound by residues 19 to 21, N131, R167, S195, I250, and Q295; that span reads TGG.

This sequence belongs to the glycosyltransferase 28 family. MurG subfamily.

It localises to the cell inner membrane. The catalysed reaction is di-trans,octa-cis-undecaprenyl diphospho-N-acetyl-alpha-D-muramoyl-L-alanyl-D-glutamyl-meso-2,6-diaminopimeloyl-D-alanyl-D-alanine + UDP-N-acetyl-alpha-D-glucosamine = di-trans,octa-cis-undecaprenyl diphospho-[N-acetyl-alpha-D-glucosaminyl-(1-&gt;4)]-N-acetyl-alpha-D-muramoyl-L-alanyl-D-glutamyl-meso-2,6-diaminopimeloyl-D-alanyl-D-alanine + UDP + H(+). It participates in cell wall biogenesis; peptidoglycan biosynthesis. In terms of biological role, cell wall formation. Catalyzes the transfer of a GlcNAc subunit on undecaprenyl-pyrophosphoryl-MurNAc-pentapeptide (lipid intermediate I) to form undecaprenyl-pyrophosphoryl-MurNAc-(pentapeptide)GlcNAc (lipid intermediate II). This Xylella fastidiosa (strain Temecula1 / ATCC 700964) protein is UDP-N-acetylglucosamine--N-acetylmuramyl-(pentapeptide) pyrophosphoryl-undecaprenol N-acetylglucosamine transferase.